The primary structure comprises 810 residues: Exocyst complex component 6B (810 aa).

Positions 79–118 form a coiled coil; it reads TELLKVRGEAQKLKNQVTDTNRKLQHEGKELVIAMEELKQ. A disordered region spans residues 258 to 282; it reads ESTSPKSEQDSGILDVEDEEDDEEV. Acidic residues predominate over residues 272–282; sequence DVEDEEDDEEV.

Belongs to the SEC15 family. As to quaternary structure, the exocyst complex is composed of SEC3, SEC5, SEC6, SEC8, SEC10, SEC15, EXO70 and EXO84.

Its function is as follows. Component of the exocyst complex involved in the docking of exocytic vesicles with fusion sites on the plasma membrane. The chain is Exocyst complex component 6B (Exoc6b) from Mus musculus (Mouse).